The chain runs to 93 residues: UPF0473 protein BH1270 (93 aa).

Belongs to the UPF0473 family.

The chain is UPF0473 protein BH1270 from Halalkalibacterium halodurans (strain ATCC BAA-125 / DSM 18197 / FERM 7344 / JCM 9153 / C-125) (Bacillus halodurans).